A 535-amino-acid chain; its full sequence is Bifunctional purine biosynthesis protein PurH (535 aa).

The 146-residue stretch at T6–V151 folds into the MGS-like domain.

Belongs to the PurH family.

The enzyme catalyses (6R)-10-formyltetrahydrofolate + 5-amino-1-(5-phospho-beta-D-ribosyl)imidazole-4-carboxamide = 5-formamido-1-(5-phospho-D-ribosyl)imidazole-4-carboxamide + (6S)-5,6,7,8-tetrahydrofolate. It carries out the reaction IMP + H2O = 5-formamido-1-(5-phospho-D-ribosyl)imidazole-4-carboxamide. It participates in purine metabolism; IMP biosynthesis via de novo pathway; 5-formamido-1-(5-phospho-D-ribosyl)imidazole-4-carboxamide from 5-amino-1-(5-phospho-D-ribosyl)imidazole-4-carboxamide (10-formyl THF route): step 1/1. Its pathway is purine metabolism; IMP biosynthesis via de novo pathway; IMP from 5-formamido-1-(5-phospho-D-ribosyl)imidazole-4-carboxamide: step 1/1. This is Bifunctional purine biosynthesis protein PurH from Pseudomonas putida (strain GB-1).